The sequence spans 149 residues: Deoxyuridine 5'-triphosphate nucleotidohydrolase (149 aa).

Substrate contacts are provided by residues 68-70 (RSG), Asn-81, 85-87 (LID), and Met-95.

Belongs to the dUTPase family. Mg(2+) serves as cofactor.

It catalyses the reaction dUTP + H2O = dUMP + diphosphate + H(+). The protein operates within pyrimidine metabolism; dUMP biosynthesis; dUMP from dCTP (dUTP route): step 2/2. Its function is as follows. This enzyme is involved in nucleotide metabolism: it produces dUMP, the immediate precursor of thymidine nucleotides and it decreases the intracellular concentration of dUTP so that uracil cannot be incorporated into DNA. The protein is Deoxyuridine 5'-triphosphate nucleotidohydrolase of Janthinobacterium sp. (strain Marseille) (Minibacterium massiliensis).